Reading from the N-terminus, the 347-residue chain is Putative coenzyme F420-dependent oxidoreductase Rv3520c (347 aa).

In Mycobacterium tuberculosis (strain ATCC 25618 / H37Rv), this protein is Putative coenzyme F420-dependent oxidoreductase Rv3520c.